The chain runs to 209 residues: Small ribosomal subunit protein uS5 (209 aa).

Residues Leu48–Ile111 enclose the S5 DRBM domain.

Belongs to the universal ribosomal protein uS5 family. As to quaternary structure, part of the 30S ribosomal subunit. Contacts protein S4.

In terms of biological role, with S4 and S12 plays an important role in translational accuracy. The protein is Small ribosomal subunit protein uS5 of Methanosarcina mazei (strain ATCC BAA-159 / DSM 3647 / Goe1 / Go1 / JCM 11833 / OCM 88) (Methanosarcina frisia).